A 62-amino-acid polypeptide reads, in one-letter code: Keratin-associated protein 8-1 (62 aa).

Residues 12-53 (GCYWGSYGYPLGYSVGCGYGSTYSPVGYGFGYGYNGSGAFGC) form a 12 X 2 AA repeats of G-[YCGS] region.

Belongs to the KRTAP type 8 family. In terms of assembly, interacts with wool keratins. Wool.

Its function is as follows. In the wool cortex, wool keratin intermediate filaments are embedded in an interfilamentous matrix, consisting of hair keratin-associated proteins (KRTAP), which are essential for the formation of a rigid and resistant wool shaft through their extensive disulfide bond cross-linking with abundant cysteine residues of wool keratins. The matrix proteins include the high-sulfur and high-glycine-tyrosine keratins. The polypeptide is Keratin-associated protein 8-1 (KRTAP8-1) (Ovis aries (Sheep)).